Here is a 201-residue protein sequence, read N- to C-terminus: 3-isopropylmalate dehydratase small subunit (201 aa).

It belongs to the LeuD family. LeuD type 1 subfamily. In terms of assembly, heterodimer of LeuC and LeuD.

The catalysed reaction is (2R,3S)-3-isopropylmalate = (2S)-2-isopropylmalate. The protein operates within amino-acid biosynthesis; L-leucine biosynthesis; L-leucine from 3-methyl-2-oxobutanoate: step 2/4. Its function is as follows. Catalyzes the isomerization between 2-isopropylmalate and 3-isopropylmalate, via the formation of 2-isopropylmaleate. In Shewanella putrefaciens (strain CN-32 / ATCC BAA-453), this protein is 3-isopropylmalate dehydratase small subunit.